The following is a 381-amino-acid chain: Chaperone protein DnaJ (381 aa).

In terms of domain architecture, J spans D5–G70. The CR-type zinc finger occupies G137 to T215. The Zn(2+) site is built by C150, C153, C167, C170, C189, C192, C203, and C206. CXXCXGXG motif repeat units lie at residues C150–G157, C167–G174, C189–G196, and C203–G210.

It belongs to the DnaJ family. As to quaternary structure, homodimer. Zn(2+) is required as a cofactor.

It is found in the cytoplasm. Its function is as follows. Participates actively in the response to hyperosmotic and heat shock by preventing the aggregation of stress-denatured proteins and by disaggregating proteins, also in an autonomous, DnaK-independent fashion. Unfolded proteins bind initially to DnaJ; upon interaction with the DnaJ-bound protein, DnaK hydrolyzes its bound ATP, resulting in the formation of a stable complex. GrpE releases ADP from DnaK; ATP binding to DnaK triggers the release of the substrate protein, thus completing the reaction cycle. Several rounds of ATP-dependent interactions between DnaJ, DnaK and GrpE are required for fully efficient folding. Also involved, together with DnaK and GrpE, in the DNA replication of plasmids through activation of initiation proteins. The polypeptide is Chaperone protein DnaJ (Chromohalobacter salexigens (strain ATCC BAA-138 / DSM 3043 / CIP 106854 / NCIMB 13768 / 1H11)).